Here is a 351-residue protein sequence, read N- to C-terminus: Hydroxymethylglutaryl-CoA synthase (351 aa).

Asp-30 provides a ligand contact to (3S)-3-hydroxy-3-methylglutaryl-CoA. Glu-82 (proton donor/acceptor) is an active-site residue. (3S)-3-hydroxy-3-methylglutaryl-CoA-binding residues include Cys-114, Ser-155, Thr-203, and His-236. Cys-114 serves as the catalytic Acyl-thioester intermediate. Catalysis depends on His-236, which acts as the Proton donor/acceptor. CoA is bound at residue Arg-241. Residues Arg-245, Asn-268, and Ser-298 each coordinate (3S)-3-hydroxy-3-methylglutaryl-CoA.

The protein belongs to the thiolase-like superfamily. Archaeal HMG-CoA synthase family. Interacts with acetoacetyl-CoA thiolase that catalyzes the precedent step in the pathway and with a DUF35 protein. The acetoacetyl-CoA thiolase/HMG-CoA synthase complex channels the intermediate via a fused CoA-binding site, which allows for efficient coupling of the endergonic thiolase reaction with the exergonic HMGCS reaction.

It carries out the reaction acetoacetyl-CoA + acetyl-CoA + H2O = (3S)-3-hydroxy-3-methylglutaryl-CoA + CoA + H(+). It participates in metabolic intermediate biosynthesis; (R)-mevalonate biosynthesis; (R)-mevalonate from acetyl-CoA: step 2/3. In terms of biological role, catalyzes the condensation of acetyl-CoA with acetoacetyl-CoA to form 3-hydroxy-3-methylglutaryl-CoA (HMG-CoA). Functions in the mevalonate (MVA) pathway leading to isopentenyl diphosphate (IPP), a key precursor for the biosynthesis of isoprenoid compounds that are building blocks of archaeal membrane lipids. This Pyrobaculum neutrophilum (strain DSM 2338 / JCM 9278 / NBRC 100436 / V24Sta) (Thermoproteus neutrophilus) protein is Hydroxymethylglutaryl-CoA synthase.